The following is a 270-amino-acid chain: Regulatory protein RecX (270 aa).

This sequence belongs to the RecX family.

It is found in the cytoplasm. Its function is as follows. Modulates RecA activity. The polypeptide is Regulatory protein RecX (Bacillus cereus (strain B4264)).